The sequence spans 969 residues: Translation initiation factor IF-2 (969 aa).

Positions 96-377 (KRDPAEPVRA…NSRNQHQDRR (282 aa)) are disordered. 3 stretches are compositionally biased toward low complexity: residues 105-157 (AEPA…QAEP), 167-181 (AAPA…EPAK), and 216-252 (PSAP…PAAP). Residues 253–264 (DRAREEARRAAE) are compositionally biased toward basic and acidic residues. Gly residues predominate over residues 357–366 (RAGGKGGRGG). A tr-type G domain is found at 470–637 (PRAPVVTVMG…NVLLQAEILE (168 aa)). The interval 479–486 (GHVDHGKT) is G1. Position 479–486 (479–486 (GHVDHGKT)) interacts with GTP. The interval 504 to 508 (GITQH) is G2. Residues 525–528 (DTPG) form a G3 region. Residues 525-529 (DTPGH) and 579-582 (NKID) each bind GTP. The segment at 579–582 (NKID) is G4. The G5 stretch occupies residues 615 to 617 (SAK).

It belongs to the TRAFAC class translation factor GTPase superfamily. Classic translation factor GTPase family. IF-2 subfamily.

The protein localises to the cytoplasm. One of the essential components for the initiation of protein synthesis. Protects formylmethionyl-tRNA from spontaneous hydrolysis and promotes its binding to the 30S ribosomal subunits. Also involved in the hydrolysis of GTP during the formation of the 70S ribosomal complex. The chain is Translation initiation factor IF-2 from Bordetella parapertussis (strain 12822 / ATCC BAA-587 / NCTC 13253).